We begin with the raw amino-acid sequence, 144 residues long: Prefoldin subunit alpha (144 aa).

It belongs to the prefoldin alpha subunit family. Heterohexamer of two alpha and four beta subunits.

It is found in the cytoplasm. Molecular chaperone capable of stabilizing a range of proteins. Seems to fulfill an ATP-independent, HSP70-like function in archaeal de novo protein folding. The polypeptide is Prefoldin subunit alpha (Methanococcus aeolicus (strain ATCC BAA-1280 / DSM 17508 / OCM 812 / Nankai-3)).